Consider the following 127-residue polypeptide: Protein translocase subunit SecE (127 aa).

Helical transmembrane passes span 17 to 37, 41 to 61, and 95 to 115; these read VKWISISIFFILSFFINMCFY, LFIRIFIISCLMLCAIGTMIY, and FIVISVTIFISFILWSIDSVI.

The protein belongs to the SecE/SEC61-gamma family. As to quaternary structure, component of the Sec protein translocase complex. Heterotrimer consisting of SecY, SecE and SecG subunits. The heterotrimers can form oligomers, although 1 heterotrimer is thought to be able to translocate proteins. Interacts with the ribosome. Interacts with SecDF, and other proteins may be involved. Interacts with SecA.

Its subcellular location is the cell inner membrane. Essential subunit of the Sec protein translocation channel SecYEG. Clamps together the 2 halves of SecY. May contact the channel plug during translocation. This is Protein translocase subunit SecE from Buchnera aphidicola subsp. Acyrthosiphon pisum (strain APS) (Acyrthosiphon pisum symbiotic bacterium).